The following is a 157-amino-acid chain: Succinate dehydrogenase assembly factor 2-B, mitochondrial (157 aa).

The transit peptide at 1–24 (MLRQFLFSTASRRLVRPMIAPHRS) directs the protein to the mitochondrion.

It belongs to the SDHAF2 family. In terms of assembly, interacts with the flavoprotein subunit within the SDH catalytic dimer.

The protein resides in the mitochondrion matrix. Its function is as follows. Plays an essential role in the assembly of succinate dehydrogenase (SDH), an enzyme complex (also referred to as respiratory complex II) that is a component of both the tricarboxylic acid (TCA) cycle and the mitochondrial electron transport chain, and which couples the oxidation of succinate to fumarate with the reduction of ubiquinone (coenzyme Q) to ubiquinol. Required for flavinylation (covalent attachment of FAD) of the flavoprotein subunit of the SDH catalytic dimer. This is Succinate dehydrogenase assembly factor 2-B, mitochondrial from Drosophila persimilis (Fruit fly).